The primary structure comprises 147 residues: UPF0306 protein KPN78578_35330 (147 aa).

The protein belongs to the UPF0306 family.

In Klebsiella pneumoniae subsp. pneumoniae (strain ATCC 700721 / MGH 78578), this protein is UPF0306 protein KPN78578_35330.